A 527-amino-acid chain; its full sequence is Type II methyltransferase M.XamI (527 aa).

Belongs to the N(4)/N(6)-methyltransferase family.

The catalysed reaction is a 2'-deoxyadenosine in DNA + S-adenosyl-L-methionine = an N(6)-methyl-2'-deoxyadenosine in DNA + S-adenosyl-L-homocysteine + H(+). Functionally, a gamma subtype methylase that recognizes the double-stranded sequence 5'-GTCGAC-3', possibly methylates A-5 on both strands, and protects the DNA from cleavage by the XamI endonuclease. This chain is Type II methyltransferase M.XamI, found in Xanthomonas campestris pv. amaranthicola.